Consider the following 712-residue polypeptide: Dipeptidyl-peptidase 7 (712 aa).

Positions 1-23 (MQMKLKSILLGAALLLGASGVAK) are cleaved as a signal peptide. The active-site Charge relay system is the H89. A coiled-coil region spans residues 136–173 (TDKVEGQLKGITDEMERLRKAQEVCQELAKKENADENQ). Residues D225 and S648 each act as charge relay system in the active site.

Belongs to the peptidase S46 family.

The protein localises to the cell outer membrane. With respect to regulation, is inhibited in vitro by typical serine protease inhibitors like diisopropyl fluorophosphate, Pefablock, and 3,4-dichloroisocoumarin, but not by typical cysteine class inhibitors such as E-64 or iododoacetic acid. In terms of biological role, catalyzes the removal of dipeptides from the N-terminus of oligopeptides. Shows a broad specificity for both aliphatic and aromatic residues in the P1 position, with glycine or proline being not acceptable in this position. Most potently cleaves the synthetic substrate Met-Leu-methylcoumaryl-7-amide (Met-Leu-MCA), Leu-Arg-MCA and Lys-Ala-MCA to a lesser extent. Is likely involved in amino acid metabolism and bacterial growth of asaccharolytic P.gingivalis, that utilizes amino acids from extracellular proteinaceous nutrients as energy and carbon sources. In Porphyromonas gingivalis (strain ATCC 33277 / DSM 20709 / CIP 103683 / JCM 12257 / NCTC 11834 / 2561), this protein is Dipeptidyl-peptidase 7.